Consider the following 211-residue polypeptide: Ribonuclease HII (211 aa).

Positions 17–211 (FLSAGVDEVG…CQPSLFEVRS (195 aa)) constitute an RNase H type-2 domain. Residues Asp-23, Glu-24, and Asp-119 each contribute to the a divalent metal cation site.

Belongs to the RNase HII family. Mn(2+) serves as cofactor. The cofactor is Mg(2+).

Its subcellular location is the cytoplasm. It catalyses the reaction Endonucleolytic cleavage to 5'-phosphomonoester.. Endonuclease that specifically degrades the RNA of RNA-DNA hybrids. This is Ribonuclease HII from Trichodesmium erythraeum (strain IMS101).